The sequence spans 148 residues: Hemoglobin subunit beta (148 aa).

One can recognise a Globin domain in the interval 3 to 148 (XWTDXERHVI…AVAALGKQYH (146 aa)). Residues His64 and His93 each contribute to the heme b site.

The protein belongs to the globin family. Heterotetramer of two alpha chains and two beta chains. As to expression, red blood cells.

Involved in oxygen transport from gills to the various peripheral tissues. This is Hemoglobin subunit beta (hbb) from Silurus asotus (Amur catfish).